We begin with the raw amino-acid sequence, 366 residues long: NADP-dependent isopropanol dehydrogenase (366 aa).

Zn(2+) is bound by residues Cys-43, His-65, Glu-66, and Asp-156. NADP(+)-binding positions include 181–184, 204–206, Tyr-224, 271–273, and Lys-346; these read IGPV, GSR, and VNY.

Belongs to the zinc-containing alcohol dehydrogenase family. As to quaternary structure, homodimer. Zn(2+) is required as a cofactor.

Its subcellular location is the cytoplasm. The enzyme catalyses propan-2-ol + NADP(+) = acetone + NADPH + H(+). In terms of biological role, alcohol dehydrogenase with a preference for medium chain secondary alcohols, such as 2-butanol and isopropanol. Has very low activity with primary alcohols, such as ethanol. Under physiological conditions, the enzyme reduces aldehydes and 2-ketones to produce secondary alcohols. Is also active with acetaldehyde and propionaldehyde. This Entamoeba histolytica (strain ATCC 30459 / HM-1:IMSS / ABRM) protein is NADP-dependent isopropanol dehydrogenase.